The chain runs to 368 residues: MGPPESAAELAAEAVELREPELQLADPASPGEEHVDVEAEGAPGRGRCWPCGAWACGSRGEPEAKKKAPCPGLGLFYTVLSAFLFSVASLFVKKVQGVHAVEISAFRCVVQMLVIIPCLIYRKTGFIGPKGQRLFLFLRGVFGSSAMILMYYAFQTTSLADATVIAFSCPVFTSIFAWIFLKEKYSLWDAFFTLFAIAGVILIVRPPFIFGSDTSGMRESYSEHIKGTFAAIGHAVLAAITLVILRKMGKSVDYFLSIWYYVILGLPEAIIILFVIGEWSLPYCGLDRLFLILIGLLGLGGQIFITKAVQIEKAGLVAIMKTMDIVFAFIFQIAFFDNVPTWWTVGGALCVVVSTTGATIRRWLQGSK.

A run of 10 helical transmembrane segments spans residues 72-92, 100-120, 134-154, 161-181, 190-210, 225-245, 256-276, 289-309, 316-336, and 340-360; these read GLGL…SLFV, AVEI…PCLI, LFLF…YYAF, DATV…WIFL, AFFT…PFIF, IKGT…LVIL, LSIW…LFVI, LFLI…TKAV, LVAI…IAFF, and PTWW…GATI. 2 EamA domains span residues 83-205 and 236-360; these read FLFS…LIVR and VLAA…GATI.

Belongs to the TMEM20 family. As to quaternary structure, interacts with STIM1; stimulated by depletion of intracellular calcium. Interacts with ORAI1. Interacts with the plasma membrane calcium-transporting ATPases ATP2B1 and ATP2B4. Interacts with ATP1A1, ATP2A2, KPNB1 and XPO1.

It localises to the cell membrane. The protein resides in the endoplasmic reticulum membrane. In terms of biological role, may play a role in intracellular calcium sensing and homeostasis. May act as a negative regulator of plasma membrane calcium-transporting ATPases preventing calcium efflux from the cell. This chain is Solute carrier family 35 member G1 (Slc35g1), found in Mus musculus (Mouse).